A 591-amino-acid polypeptide reads, in one-letter code: Aspartate--tRNA(Asp/Asn) ligase (591 aa).

Residue glutamate 174 coordinates L-aspartate. The aspartate stretch occupies residues 198–201 (QLFK). Arginine 220 contacts L-aspartate. ATP is bound by residues 220 to 222 (RDE) and glutamine 229. An L-aspartate-binding site is contributed by histidine 450. An ATP-binding site is contributed by glutamate 483. Arginine 490 is a binding site for L-aspartate. 535–538 (GLDR) contacts ATP.

The protein belongs to the class-II aminoacyl-tRNA synthetase family. Type 1 subfamily. Homodimer.

It is found in the cytoplasm. It catalyses the reaction tRNA(Asx) + L-aspartate + ATP = L-aspartyl-tRNA(Asx) + AMP + diphosphate. In terms of biological role, aspartyl-tRNA synthetase with relaxed tRNA specificity since it is able to aspartylate not only its cognate tRNA(Asp) but also tRNA(Asn). Reaction proceeds in two steps: L-aspartate is first activated by ATP to form Asp-AMP and then transferred to the acceptor end of tRNA(Asp/Asn). The polypeptide is Aspartate--tRNA(Asp/Asn) ligase (Pseudomonas putida (strain ATCC 700007 / DSM 6899 / JCM 31910 / BCRC 17059 / LMG 24140 / F1)).